The chain runs to 250 residues: DNA repair protein RecO (250 aa).

The protein belongs to the RecO family.

Functionally, involved in DNA repair and RecF pathway recombination. The chain is DNA repair protein RecO from Staphylococcus aureus (strain MW2).